A 121-amino-acid chain; its full sequence is Flagellar protein FliT (121 aa).

Residues 1-50 (MNHAPHLYFAWQQLVDKSQLMLRLATEEQWDELIASEMAYVNAVQEIAHL) form a required for homodimerization region. A fliD binding region spans residues 60-98 (MQEQLRPMLRLILDNESKVKQLLQIRMDELAKLVGQSSV).

It belongs to the FliT family. Homodimer. Interacts with FliD and FlhC.

The protein localises to the cytoplasm. It localises to the cytosol. Its function is as follows. Dual-function protein that regulates the transcription of class 2 flagellar operons and that also acts as an export chaperone for the filament-capping protein FliD. As a transcriptional regulator, acts as an anti-FlhDC factor; it directly binds FlhC, thus inhibiting the binding of the FlhC/FlhD complex to class 2 promoters, resulting in decreased expression of class 2 flagellar operons. As a chaperone, effects FliD transition to the membrane by preventing its premature polymerization, and by directing it to the export apparatus. This Shigella sonnei (strain Ss046) protein is Flagellar protein FliT.